The sequence spans 229 residues: Orotidine 5'-phosphate decarboxylase (229 aa).

Substrate-binding positions include D10, K32, D59–T68, T119, R180, Q189, G209, and R210. K61 acts as the Proton donor in catalysis.

This sequence belongs to the OMP decarboxylase family. Type 1 subfamily. In terms of assembly, homodimer.

It carries out the reaction orotidine 5'-phosphate + H(+) = UMP + CO2. It functions in the pathway pyrimidine metabolism; UMP biosynthesis via de novo pathway; UMP from orotate: step 2/2. Its function is as follows. Catalyzes the decarboxylation of orotidine 5'-monophosphate (OMP) to uridine 5'-monophosphate (UMP). This chain is Orotidine 5'-phosphate decarboxylase, found in Legionella pneumophila subsp. pneumophila (strain Philadelphia 1 / ATCC 33152 / DSM 7513).